We begin with the raw amino-acid sequence, 66 residues long: Conotoxin Cl14.1a (66 aa).

The first 19 residues, 1-19, serve as a signal peptide directing secretion; that stretch reads MNVTAMFIVLLLTMPLTDG. Positions 20-49 are excised as a propeptide; sequence FNIRAINGGELFGLVQRDAGNALDHGFYRR.

Belongs to the conotoxin L superfamily. In terms of processing, contains 2 disulfide bonds. Expressed by the venom duct.

The protein resides in the secreted. Functionally, probable neurotoxin with unknown target. Possibly targets ion channels. This peptide could be considered as an apoptosis activator in some cancers (tested on lung and breast cancer cell lines). Provokes the decrease of H1299 lung cancer cells viability after 24 hours treatment, and induces a high Bax/Bcl-2 ratio, which suggests that this peptide can activate apoptosis in H1299 cells. In addition, H1299 and H1437 lung cancer cell lines treated with this peptide have decreased cell viability, activated caspases, and reduced expression of the pro-survival protein NF-kappa-B (NFKB1), indicating activation of apoptosis. In synergy with MicroRNA-101-3p, this synthetic peptide inhibits breast cancer cells (SK-BR-3 and MCF-7) migration, invasion, and proliferation through suppressing the expression of the methyltransferase EZH2. In parallel, this synergy treatment is able to promote the apoptosis of breast cancer cells. Against microbes, this synthetic toxin (at micromolar concentrations) lowers viability and inhibits host cell invasion by the opportunistic parasite Toxoplasma gondii (tachyzoite form). In addition, it permits T.gondii intracellular replication to decrease while viability of the host cell is unaffected. The chain is Conotoxin Cl14.1a from Californiconus californicus (California cone).